The primary structure comprises 425 residues: Serine--tRNA ligase (425 aa).

L-serine is bound at residue 230-232 (TSE). 261–263 (RKE) contacts ATP. Glutamate 284 is an L-serine binding site. 348–351 (EISS) serves as a coordination point for ATP. Serine 385 serves as a coordination point for L-serine.

This sequence belongs to the class-II aminoacyl-tRNA synthetase family. Type-1 seryl-tRNA synthetase subfamily. As to quaternary structure, homodimer. The tRNA molecule binds across the dimer.

The protein localises to the cytoplasm. It catalyses the reaction tRNA(Ser) + L-serine + ATP = L-seryl-tRNA(Ser) + AMP + diphosphate + H(+). It carries out the reaction tRNA(Sec) + L-serine + ATP = L-seryl-tRNA(Sec) + AMP + diphosphate + H(+). The protein operates within aminoacyl-tRNA biosynthesis; selenocysteinyl-tRNA(Sec) biosynthesis; L-seryl-tRNA(Sec) from L-serine and tRNA(Sec): step 1/1. In terms of biological role, catalyzes the attachment of serine to tRNA(Ser). Is also able to aminoacylate tRNA(Sec) with serine, to form the misacylated tRNA L-seryl-tRNA(Sec), which will be further converted into selenocysteinyl-tRNA(Sec). The chain is Serine--tRNA ligase from Wolbachia pipientis wMel.